Reading from the N-terminus, the 437-residue chain is Enolase 1 (437 aa).

A Glycyl lysine isopeptide (Lys-Gly) (interchain with G-Cter in ubiquitin) cross-link involves residue K60. A phosphoserine mark is found at S119 and S138. Substrate contacts are provided by H160 and E169. Phosphoserine is present on S188. E212 acts as the Proton donor in catalysis. Residue K243 forms a Glycyl lysine isopeptide (Lys-Gly) (interchain with G-Cter in ubiquitin) linkage. Mg(2+) contacts are provided by D247 and E296. E296 is a substrate binding site. A Phosphothreonine modification is found at T313. Residue D321 participates in substrate binding. D321 is a Mg(2+) binding site. T324 is subject to Phosphothreonine. The Proton acceptor role is filled by K346. K358 participates in a covalent cross-link: Glycyl lysine isopeptide (Lys-Gly) (interchain with G-Cter in ubiquitin). Residues 373 to 376 and K397 each bind substrate; that span reads SHRS.

The protein belongs to the enolase family. Homodimer. Mg(2+) serves as cofactor.

The protein resides in the cytoplasm. It catalyses the reaction (2R)-2-phosphoglycerate = phosphoenolpyruvate + H2O. Its pathway is carbohydrate degradation; glycolysis; pyruvate from D-glyceraldehyde 3-phosphate: step 4/5. The polypeptide is Enolase 1 (ENO1) (Saccharomyces cerevisiae (strain ATCC 204508 / S288c) (Baker's yeast)).